Consider the following 327-residue polypeptide: Cytochrome f (327 aa).

The N-terminal stretch at 1–24 (MKRIGLVFCALLLLLGMGARPAAA) is a signal peptide. Residues Tyr-25, Cys-45, Cys-48, and His-49 each coordinate heme. The helical transmembrane segment at 293-313 (VKWLVAFLAAITITQVLLVLK) threads the bilayer.

The protein belongs to the cytochrome f family. As to quaternary structure, the 4 large subunits of the cytochrome b6-f complex are cytochrome b6, subunit IV (17 kDa polypeptide, PetD), cytochrome f and the Rieske protein, while the 4 small subunits are PetG, PetL, PetM and PetN. The complex functions as a dimer. Heme is required as a cofactor.

The protein localises to the cellular thylakoid membrane. Functionally, component of the cytochrome b6-f complex, which mediates electron transfer between photosystem II (PSII) and photosystem I (PSI), cyclic electron flow around PSI, and state transitions. In Synechococcus sp. (strain JA-2-3B'a(2-13)) (Cyanobacteria bacterium Yellowstone B-Prime), this protein is Cytochrome f.